Here is a 233-residue protein sequence, read N- to C-terminus: Biosynthetic peptidoglycan transglycosylase (233 aa).

A helical transmembrane segment spans residues 8 to 28; it reads LIALPVGIFIFFNAYVYGNII.

Belongs to the glycosyltransferase 51 family.

The protein localises to the cell inner membrane. It carries out the reaction [GlcNAc-(1-&gt;4)-Mur2Ac(oyl-L-Ala-gamma-D-Glu-L-Lys-D-Ala-D-Ala)](n)-di-trans,octa-cis-undecaprenyl diphosphate + beta-D-GlcNAc-(1-&gt;4)-Mur2Ac(oyl-L-Ala-gamma-D-Glu-L-Lys-D-Ala-D-Ala)-di-trans,octa-cis-undecaprenyl diphosphate = [GlcNAc-(1-&gt;4)-Mur2Ac(oyl-L-Ala-gamma-D-Glu-L-Lys-D-Ala-D-Ala)](n+1)-di-trans,octa-cis-undecaprenyl diphosphate + di-trans,octa-cis-undecaprenyl diphosphate + H(+). Its pathway is cell wall biogenesis; peptidoglycan biosynthesis. In terms of biological role, peptidoglycan polymerase that catalyzes glycan chain elongation from lipid-linked precursors. This Neisseria meningitidis serogroup A / serotype 4A (strain DSM 15465 / Z2491) protein is Biosynthetic peptidoglycan transglycosylase.